The following is a 126-amino-acid chain: Protein MGF 100-1R (126 aa).

It belongs to the asfivirus MGF 100 family.

Functionally, plays a role in virus cell tropism, and may be required for efficient virus replication in macrophages. In Ornithodoros (relapsing fever ticks), this protein is Protein MGF 100-1R.